The following is a 1071-amino-acid chain: MPKRTDLKSILIIGAGPIVIGQACEFDYSGAQACKALREEGYKVILVNSNPATIMTDPEMADVTYIEPIMWQTVEKIIAKERPDAILPTMGGQTALNCALDLARNGVLAKYNVELIGATEDAIDKAEDRGRFKEAMEKIGLSCPKSFVCHTMNEALAAQEQVGFPTLIRPSFTMGGSGGGIAYNKDEFLAICERGFDASPTHELLIEQSVLGWKEYEMEVVRDKNDNCIIICSIENFDPMGVHTGDSITVAPAQTLTDKEYQIMRNASLAVLREIGVDTGGSNVQFAVNPANGEMIVIEMNPRVSRSSALASKATGFPIAKVAAKLAVGFTLDELRNDITGGKTPASFEPSIDYVVTKIPRFAFEKFPAADDRLTTQMKSVGEVMAMGRTIQESFQKALRGLETGLCGFNPRSEDKAEIRRELANPGPERMLFVADAFRAGFTLEEIHEICAIDPWFLAQIEDLMKEEKAVSDGILSDLDFAALRRLKRKGFSDKRLAQLLNVSEKEVREHRYALKLHPVYKRVDTCAAEFATETAYLYSTYEEECESRPSDRKKVMILGGGPNRIGQGIEFDYCCVHAALALRESGFETIMVNCNPETVSTDFDTSDRLYFEPLTLEDVLEIVRTENPWGVIVHYGGQTPLKLANALVENGVNIIGTSADSIDAAEDRERFQKVLNDLGLRQPPNRIAHNEEEALVKAEEIGYPLVVRPSYVLGGRAMQVVHSAEELQKYMREAVQVSEDSPVLLDFFLNNAIEVDVDCVSDGKDVVIGGIMQHVEQAGIHSGDSGCSLPPYSLSEEIQDEIRRQTKAMAYALGVVGLMNVQFAVQDGVVFVLEVNPRASRTVPFVSKATGVPLAKVGARCMAGISLKEQGVEKEVVPDFYAVKEAVFPFIKFPGVDTILGPEMRSTGEVMGVGASFGEAYYKAQLGAGERLNPTGKIFLSVREEDKERVIKTAKNFQVLGYGICATRGTAQYLTEHGLIVQTINKVPEGRPHIGDALKNGEIALVVNTVSSDPQSVSDSHIIRQSALQQRVPQYTTTAGGEAMSEGAKSRDHLGVYSVQELHGRLKNRN.

The carboxyphosphate synthetic domain stretch occupies residues 1–403 (MPKRTDLKSI…SFQKALRGLE (403 aa)). Positions 129, 169, 175, 176, 208, 210, 215, 241, 242, 243, 285, and 299 each coordinate ATP. Residues 133–328 (KEAMEKIGLS…IAKVAAKLAV (196 aa)) enclose the ATP-grasp 1 domain. The Mg(2+) site is built by glutamine 285, glutamate 299, and asparagine 301. Mn(2+) contacts are provided by glutamine 285, glutamate 299, and asparagine 301. Residues 404–548 (TGLCGFNPRS…YSTYEEECES (145 aa)) are oligomerization domain. Positions 549 to 930 (RPSDRKKVMI…AYYKAQLGAG (382 aa)) are carbamoyl phosphate synthetic domain. The ATP-grasp 2 domain maps to 673-864 (QKVLNDLGLR…LAKVGARCMA (192 aa)). Positions 709, 748, 750, 755, 780, 781, 782, 783, 823, and 835 each coordinate ATP. Mg(2+) contacts are provided by glutamine 823, glutamate 835, and asparagine 837. Mn(2+)-binding residues include glutamine 823, glutamate 835, and asparagine 837. Residues 931-1071 (ERLNPTGKIF…ELHGRLKNRN (141 aa)) enclose the MGS-like domain. The allosteric domain stretch occupies residues 931 to 1071 (ERLNPTGKIF…ELHGRLKNRN (141 aa)).

This sequence belongs to the CarB family. In terms of assembly, composed of two chains; the small (or glutamine) chain promotes the hydrolysis of glutamine to ammonia, which is used by the large (or ammonia) chain to synthesize carbamoyl phosphate. Tetramer of heterodimers (alpha,beta)4. The cofactor is Mg(2+). Requires Mn(2+) as cofactor.

It catalyses the reaction hydrogencarbonate + L-glutamine + 2 ATP + H2O = carbamoyl phosphate + L-glutamate + 2 ADP + phosphate + 2 H(+). It carries out the reaction hydrogencarbonate + NH4(+) + 2 ATP = carbamoyl phosphate + 2 ADP + phosphate + 2 H(+). Its pathway is amino-acid biosynthesis; L-arginine biosynthesis; carbamoyl phosphate from bicarbonate: step 1/1. It participates in pyrimidine metabolism; UMP biosynthesis via de novo pathway; (S)-dihydroorotate from bicarbonate: step 1/3. Large subunit of the glutamine-dependent carbamoyl phosphate synthetase (CPSase). CPSase catalyzes the formation of carbamoyl phosphate from the ammonia moiety of glutamine, carbonate, and phosphate donated by ATP, constituting the first step of 2 biosynthetic pathways, one leading to arginine and/or urea and the other to pyrimidine nucleotides. The large subunit (synthetase) binds the substrates ammonia (free or transferred from glutamine from the small subunit), hydrogencarbonate and ATP and carries out an ATP-coupled ligase reaction, activating hydrogencarbonate by forming carboxy phosphate which reacts with ammonia to form carbamoyl phosphate. This is Carbamoyl phosphate synthase large chain from Neisseria meningitidis serogroup B (strain ATCC BAA-335 / MC58).